A 128-amino-acid polypeptide reads, in one-letter code: Mite group 2 allergen Gly d 2.01 (128 aa).

The protein belongs to the NPC2 family.

It localises to the secreted. The chain is Mite group 2 allergen Gly d 2.01 from Glycyphagus domesticus (House itch mite).